We begin with the raw amino-acid sequence, 416 residues long: Protein PBN1 (416 aa).

At 1–385 (MVTRHRVTVL…PDTKDYSKIK (385 aa)) the chain is on the lumenal side. N-linked (GlcNAc...) asparagine glycans are attached at residues N24, N85, N120, N212, and N365. A helical; Signal-anchor for type III membrane protein membrane pass occupies residues 386 to 405 (NGTLLCLLISIIYIFSKVFG). Over 406–416 (NNKKKRSVKRE) the chain is Cytoplasmic.

This sequence belongs to the PIGX family. Post-translationally, N-glycosylated.

The protein resides in the endoplasmic reticulum membrane. It participates in glycolipid biosynthesis; glycosylphosphatidylinositol-anchor biosynthesis. Functionally, required for proper folding and/or the stability of a subset of proteins in the endoplasmic reticulum. Aids the autocatalytic processing of PRB1. Component of glycosylphosphatidylinositol-mannosyltransferase 1 which transfers the first of the 4 mannoses in the GPI-anchor precursors during GPI-anchor biosynthesis. Probably acts by stabilizing the mannosyltransferase GPI14. This is Protein PBN1 (PBN1) from Saccharomyces cerevisiae (strain ATCC 204508 / S288c) (Baker's yeast).